The sequence spans 96 residues: Transcription and mRNA export factor ENY2 (96 aa).

It belongs to the ENY2 family. As to quaternary structure, component of the nuclear pore complex (NPC)-associated TREX-2 complex (transcription and export complex 2). Component of the SAGA transcription coactivator-HAT complex. Within the SAGA complex, participates in a subcomplex of SAGA called the DUB module (deubiquitination module).

The protein resides in the nucleus. Its subcellular location is the nucleoplasm. In terms of biological role, involved in mRNA export coupled transcription activation by association with both the TREX-2 and the SAGA complexes. The transcription regulatory histone acetylation (HAT) complex SAGA is a multiprotein complex that activates transcription by remodeling chromatin and mediating histone acetylation and deubiquitination. Within the SAGA complex, participates in a subcomplex that specifically deubiquitinates histones. The SAGA complex is recruited to specific gene promoters by activators, where it is required for transcription. The TREX-2 complex functions in docking export-competent ribonucleoprotein particles (mRNPs) to the nuclear entrance of the nuclear pore complex (nuclear basket). TREX-2 participates in mRNA export and accurate chromatin positioning in the nucleus by tethering genes to the nuclear periphery. This Taeniopygia guttata (Zebra finch) protein is Transcription and mRNA export factor ENY2.